A 366-amino-acid chain; its full sequence is Endophilin-B1 (366 aa).

Residues 1–30 (MNIMDFNMKKLAADAGTFLSRAVQFTEEKL) form a membrane-binding amphipathic helix region. The segment at 1 to 37 (MNIMDFNMKKLAADAGTFLSRAVQFTEEKLGQAEKTE) is required for membrane binding. A BAR domain is found at 27 to 261 (EEKLGQAEKT…LGSFPSTFLS (235 aa)). 2 coiled-coil regions span residues 34-54 (EKTE…CTKQ) and 160-185 (KERK…AKVA). One can recognise an SH3 domain in the interval 306 to 366 (SGSRKARVLY…VPITYLELLN (61 aa)).

Belongs to the endophilin family. As to quaternary structure, homodimer, and heterodimer with SH3GLB2. Binds BAX. Binds DNM1, HTT, AMPH, BIN1 and ARFGAP1.

The protein resides in the cytoplasm. Its subcellular location is the golgi apparatus membrane. It localises to the mitochondrion outer membrane. In terms of biological role, may be required for normal outer mitochondrial membrane dynamics. Required for coatomer-mediated retrograde transport in certain cells. May recruit other proteins to membranes with high curvature. May promote membrane fusion. This is Endophilin-B1 from Gallus gallus (Chicken).